The following is a 147-amino-acid chain: Hemoglobin anodic subunit beta (147 aa).

The 146-residue stretch at 2-147 (EWTEDERTAI…VTSALARQYH (146 aa)) folds into the Globin domain. Heme b-binding residues include histidine 63 and histidine 92.

Belongs to the globin family. In terms of assembly, heterotetramer of two alpha chains and two beta chains. As to expression, red blood cells.

Involved in oxygen transport from gills to the various peripheral tissues. This is Hemoglobin anodic subunit beta (hbb1) from Anguilla anguilla (European freshwater eel).